A 49-amino-acid polypeptide reads, in one-letter code: uncharacterized protein (49 aa).

This is an uncharacterized protein from Treponema pallidum (strain Nichols).